The primary structure comprises 72 residues: MVCIPCIVIPVLLWIFKKFLEPYIYPVVSRIWPKKAVQQSGDKNMSKVDCKGAGTNGLPTKGPTEVSDKKKD.

The necessary for its localzation to the endoplasmic reticulum and lipid droplets stretch occupies residues 1–33 (MVCIPCIVIPVLLWIFKKFLEPYIYPVVSRIWP). Residues 36–72 (AVQQSGDKNMSKVDCKGAGTNGLPTKGPTEVSDKKKD) form a disordered region.

This sequence belongs to the UPF0729 family. As to quaternary structure, interacts with DERL1 and AMFR. Post-translationally, undergoes ER-associated degradation (ERAD).

It is found in the endoplasmic reticulum. The protein localises to the lipid droplet. Functionally, may activate the NF-kappa-B signaling pathway. This chain is UPF0729 protein C18orf32 homolog, found in Mus musculus (Mouse).